Here is a 645-residue protein sequence, read N- to C-terminus: Developmental regulatory protein wetA (645 aa).

Disordered stretches follow at residues 158 to 187 (SLHS…RKPK), 201 to 249 (TNLR…VSPP), 284 to 376 (YYGQ…QMHW), 461 to 578 (AQTF…DGAS), and 596 to 618 (GVAP…DRRR). Residues 240–249 (TQGNLPVSPP) show a composition bias toward polar residues. 2 stretches are compositionally biased toward basic residues: residues 315–326 (QHHHHPHHHHQQ) and 351–361 (QHQHQHHHQQQ). Residues 362–373 (QHHQQQQQQQHQ) are compositionally biased toward low complexity. Residues 509–518 (GPSSSPTPAD) are compositionally biased toward polar residues. Over residues 528-546 (SSGASVSSLRSSSGRLPAS) the composition is skewed to low complexity. Over residues 562 to 572 (ISGSNSATSLG) the composition is skewed to polar residues.

The protein belongs to the wetA family.

Its function is as follows. BrlA, abaA and wetA are pivotal regulators of conidiophore development and conidium maturation. They act individually and together to regulate their own expression and that of numerous other sporulation-specific genes. BrlA, abaA and wetA act together to positively regulate the expression of the Pks1 gene cluster that mediates the biosynthesis of an anthraquinone derivative pigment that contributes to conidial pigmentation that provides protection from UV radiation, heat and cold stress. This Metarhizium robertsii (strain ARSEF 23 / ATCC MYA-3075) (Metarhizium anisopliae (strain ARSEF 23)) protein is Developmental regulatory protein wetA.